Reading from the N-terminus, the 149-residue chain is Large ribosomal subunit protein bL9 (149 aa).

Belongs to the bacterial ribosomal protein bL9 family.

Functionally, binds to the 23S rRNA. This chain is Large ribosomal subunit protein bL9, found in Christiangramia forsetii (strain DSM 17595 / CGMCC 1.15422 / KT0803) (Gramella forsetii).